Reading from the N-terminus, the 60-residue chain is Metallothionein (60 aa).

Residues 1-28 (MDPCDCAKTGTCNCGTSCTCANCSCTKC) form a beta region. A divalent metal cation is bound by residues cysteine 4, cysteine 6, cysteine 12, cysteine 14, cysteine 18, cysteine 20, cysteine 23, cysteine 25, cysteine 28, cysteine 32, cysteine 33, cysteine 35, cysteine 36, cysteine 40, cysteine 43, cysteine 47, cysteine 49, cysteine 54, cysteine 58, and cysteine 59. Residues 29–60 (KKSCCECCPSGCSKCASGCACKDKTCDTNCCQ) are alpha.

This sequence belongs to the metallothionein superfamily. Type 1 family.

Functionally, metallothioneins have a high content of cysteine residues that bind various heavy metals. The polypeptide is Metallothionein (mt) (Gadus morhua (Atlantic cod)).